The chain runs to 114 residues: Fatty acid-binding protein, liver (114 aa).

It belongs to the calycin superfamily. Fatty-acid binding protein (FABP) family. The N-terminus is blocked.

It is found in the cytoplasm. In terms of biological role, FABPs are thought to play a role in the intracellular transport of long-chain fatty acids and their acyl-CoA esters. The protein is Fatty acid-binding protein, liver of Lethenteron camtschaticum (Japanese lamprey).